The chain runs to 863 residues: Leucine--tRNA ligase (863 aa).

Positions 42–52 (PYPSGKIHMGH) match the 'HIGH' region motif. A 'KMSKS' region motif is present at residues 618 to 622 (KMSKS). Lys621 lines the ATP pocket.

This sequence belongs to the class-I aminoacyl-tRNA synthetase family.

Its subcellular location is the cytoplasm. The enzyme catalyses tRNA(Leu) + L-leucine + ATP = L-leucyl-tRNA(Leu) + AMP + diphosphate. This chain is Leucine--tRNA ligase, found in Desulforapulum autotrophicum (strain ATCC 43914 / DSM 3382 / VKM B-1955 / HRM2) (Desulfobacterium autotrophicum).